The sequence spans 254 residues: Guanylate kinase (254 aa).

The 180-residue stretch at 64–243 folds into the Guanylate kinase-like domain; sequence KHLVVLAGPT…AAREVVDLMM (180 aa). 71 to 78 contributes to the ATP binding site; sequence GPTAVGKG.

It belongs to the guanylate kinase family.

Its subcellular location is the cytoplasm. The enzyme catalyses GMP + ATP = GDP + ADP. Functionally, essential for recycling GMP and indirectly, cGMP. In Leifsonia xyli subsp. xyli (strain CTCB07), this protein is Guanylate kinase.